A 246-amino-acid chain; its full sequence is Complement C1q subcomponent subunit C (246 aa).

The signal sequence occupies residues 1-29; sequence MVVGPSCQPPCGLCLLLLFLLALPLRSQA. A Collagen-like domain is found at 32–113; that stretch reads GCYGIPGMPG…GPPGEPGVEG (82 aa). A 4-hydroxyproline mark is found at Pro37, Pro40, Pro43, Pro46, and Pro64. Residues 44 to 116 are disordered; it reads GAPGKDGHDG…GEPGVEGRYK (73 aa). Lys76 carries the 5-hydroxylysine modification. Lys76 carries an O-linked (Gal...) hydroxylysine glycan. A 4-hydroxyproline mark is found at Pro82, Pro97, Pro100, and Pro106. A compositionally biased stretch (pro residues) spans 99–108; sequence DPGPRGPPGE. A C1q domain is found at 116–246; the sequence is KQKHQSVFTV…VFSGFLLFPD (131 aa). A disulfide bridge links Cys180 with Cys194.

Core component of the complement C1 complex, a calcium-dependent complex composed of 1 molecule of the C1Q subcomplex, 2 molecules of C1R and 2 molecules of C1S. The C1Q subcomplex is composed 18 subunits: 3 chains of C1QA, C1QB, and C1QC trimerize to form 6 collagen-like triple helices connected to six globular ligand-recognition modules (C1q domain). In terms of processing, O-linked glycans consist of Glc-Gal disaccharides bound to the oxygen atom of post-translationally added hydroxyl groups.

Its subcellular location is the secreted. It localises to the cell surface. The C1Q subcomplex is inhibited by sulfated molecules, such as triterpenoid sulfates, heparan sulfate, or chondroitin sulfates. Its function is as follows. Core component of the complement C1 complex, a multiprotein complex that initiates the classical pathway of the complement system, a cascade of proteins that leads to phagocytosis and breakdown of pathogens and signaling that strengthens the adaptive immune system. The classical complement pathway is initiated by the C1Q subcomplex of the C1 complex, which specifically binds IgG or IgM immunoglobulins complexed with antigens, forming antigen-antibody complexes on the surface of pathogens: C1QA, together with C1QB and C1QC, specifically recognizes and binds the Fc regions of IgG or IgM via its C1q domain. Immunoglobulin-binding activates the proenzyme C1R, which cleaves C1S, initiating the proteolytic cascade of the complement system. The C1Q subcomplex is activated by a hexamer of IgG complexed with antigens, while it is activated by a pentameric IgM. The C1Q subcomplex also recognizes and binds phosphatidylserine exposed on the surface of cells undergoing programmed cell death, possibly promoting activation of the complement system. In Mus musculus (Mouse), this protein is Complement C1q subcomponent subunit C.